The chain runs to 345 residues: S-adenosylmethionine:tRNA ribosyltransferase-isomerase (345 aa).

Belongs to the QueA family. As to quaternary structure, monomer.

It localises to the cytoplasm. It carries out the reaction 7-aminomethyl-7-carbaguanosine(34) in tRNA + S-adenosyl-L-methionine = epoxyqueuosine(34) in tRNA + adenine + L-methionine + 2 H(+). It functions in the pathway tRNA modification; tRNA-queuosine biosynthesis. Transfers and isomerizes the ribose moiety from AdoMet to the 7-aminomethyl group of 7-deazaguanine (preQ1-tRNA) to give epoxyqueuosine (oQ-tRNA). This is S-adenosylmethionine:tRNA ribosyltransferase-isomerase from Helicobacter pylori (strain HPAG1).